A 350-amino-acid polypeptide reads, in one-letter code: tRNA uridine(34) hydroxylase (350 aa).

One can recognise a Rhodanese domain in the interval 146-240; it reads DDPDAVFIDM…YARRAREQGL (95 aa). The active-site Cysteine persulfide intermediate is the Cys200. Over residues 319–328 the composition is skewed to basic and acidic residues; it reads RRRRAGRENG. The segment at 319–350 is disordered; sequence RRRRAGRENGNKIFNKSRGRLNSKLSIPDPAE.

This sequence belongs to the TrhO family.

It carries out the reaction uridine(34) in tRNA + AH2 + O2 = 5-hydroxyuridine(34) in tRNA + A + H2O. Functionally, catalyzes oxygen-dependent 5-hydroxyuridine (ho5U) modification at position 34 in tRNAs. The chain is tRNA uridine(34) hydroxylase from Salmonella agona (strain SL483).